The following is a 559-amino-acid chain: WD repeat-containing protein JIP5 (559 aa).

WD repeat units follow at residues Q26 to Q67, A77 to K116, R117 to K156, D162 to R201, N207 to F247, D265 to Q306, A313 to K347, R354 to E394, and D428 to E470. Disordered regions lie at residues S386 to L500 and E515 to L559. The span at S391 to S417 shows a compositional bias: acidic residues. Residues D418–D428 are compositionally biased toward basic and acidic residues. Residues D482 to E494 show a composition bias toward acidic residues. The segment covering E520–K534 has biased composition (basic and acidic residues). Basic residues predominate over residues K535 to K544.

This sequence belongs to the WD repeat WDR55 family.

The protein localises to the nucleus. Its subcellular location is the nucleolus. The protein is WD repeat-containing protein JIP5 (JIP5) of Vanderwaltozyma polyspora (strain ATCC 22028 / DSM 70294 / BCRC 21397 / CBS 2163 / NBRC 10782 / NRRL Y-8283 / UCD 57-17) (Kluyveromyces polysporus).